We begin with the raw amino-acid sequence, 476 residues long: Exoglucanase-6A (476 aa).

An N-terminal signal peptide occupies residues 1–16 (MAKFFLTAAFAAAALA). Cystine bridges form between C33/C50 and C44/C60. Positions 33-60 (CGGIGFNGPTCCQSGSTCVKQNDWYSQC) constitute a CBM1 domain. The disordered stretch occupies residues 67–94 (TTTSTTSTSSSSTTSRATSTTRTGGVTS). The O-linked (Man...) threonine glycan is linked to T144. S153 carries O-linked (Man...) serine glycosylation. 2 residues coordinate substrate: W163 and D165. Residue N167 is glycosylated (N-linked (GlcNAc...) asparagine). Residues 200-222 (YDLPDRDCAAAASNGEWAIANNG) form a substrate binding loop 1 region. D252 (proton donor) is an active-site residue. Substrate contacts are provided by H297, W300, N336, W397, K425, and E429. The tract at residues 423–461 (WVKPGGECDGTSDTTAARYDYHCGLEDALKPAPEAGQWF) is substrate binding loop 2. D431 (proton acceptor) is an active-site residue.

This sequence belongs to the glycosyl hydrolase 6 (cellulase A) family. As to quaternary structure, monomer.

The enzyme catalyses Hydrolysis of (1-&gt;4)-beta-D-glucosidic linkages in cellulose and cellotetraose, releasing cellobiose from the non-reducing ends of the chains.. In terms of biological role, plays a central role in the recycling of plant biomass. The biological conversion of cellulose to glucose generally requires three types of hydrolytic enzymes: (1) Endoglucanases which cut internal beta-1,4-glucosidic bonds; (2) Exocellobiohydrolases that cut the disaccharide cellobiose from the non-reducing end of the cellulose polymer chain; (3) Beta-1,4-glucosidases which hydrolyze the cellobiose and other short cello-oligosaccharides to glucose. This is Exoglucanase-6A from Humicola insolens (Soft-rot fungus).